Reading from the N-terminus, the 327-residue chain is Tetraacyldisaccharide 4'-kinase (327 aa).

56 to 63 (FVGGTGKT) serves as a coordination point for ATP.

The protein belongs to the LpxK family.

The enzyme catalyses a lipid A disaccharide + ATP = a lipid IVA + ADP + H(+). It participates in glycolipid biosynthesis; lipid IV(A) biosynthesis; lipid IV(A) from (3R)-3-hydroxytetradecanoyl-[acyl-carrier-protein] and UDP-N-acetyl-alpha-D-glucosamine: step 6/6. Functionally, transfers the gamma-phosphate of ATP to the 4'-position of a tetraacyldisaccharide 1-phosphate intermediate (termed DS-1-P) to form tetraacyldisaccharide 1,4'-bis-phosphate (lipid IVA). This is Tetraacyldisaccharide 4'-kinase from Halorhodospira halophila (strain DSM 244 / SL1) (Ectothiorhodospira halophila (strain DSM 244 / SL1)).